A 317-amino-acid chain; its full sequence is Transaldolase (317 aa).

Catalysis depends on Lys132, which acts as the Schiff-base intermediate with substrate.

Belongs to the transaldolase family. Type 1 subfamily. In terms of assembly, homodimer.

The protein localises to the cytoplasm. The enzyme catalyses D-sedoheptulose 7-phosphate + D-glyceraldehyde 3-phosphate = D-erythrose 4-phosphate + beta-D-fructose 6-phosphate. It participates in carbohydrate degradation; pentose phosphate pathway; D-glyceraldehyde 3-phosphate and beta-D-fructose 6-phosphate from D-ribose 5-phosphate and D-xylulose 5-phosphate (non-oxidative stage): step 2/3. Transaldolase is important for the balance of metabolites in the pentose-phosphate pathway. The protein is Transaldolase (talB) of Escherichia coli O104:H4 (strain 2009EL-2071).